The chain runs to 505 residues: Ribose import ATP-binding protein RbsA 2 (505 aa).

ABC transporter domains lie at 13–249 (LALE…VGRD) and 259–503 (VRAG…TGRA). 45–52 (GENGAGKS) contributes to the ATP binding site.

Belongs to the ABC transporter superfamily. Ribose importer (TC 3.A.1.2.1) family. In terms of assembly, the complex is composed of an ATP-binding protein (RbsA), two transmembrane proteins (RbsC) and a solute-binding protein (RbsB).

It localises to the cell membrane. The catalysed reaction is D-ribose(out) + ATP + H2O = D-ribose(in) + ADP + phosphate + H(+). Its function is as follows. Part of the ABC transporter complex RbsABC involved in ribose import. Responsible for energy coupling to the transport system. This Streptomyces avermitilis (strain ATCC 31267 / DSM 46492 / JCM 5070 / NBRC 14893 / NCIMB 12804 / NRRL 8165 / MA-4680) protein is Ribose import ATP-binding protein RbsA 2.